Consider the following 302-residue polypeptide: Exodeoxyribonuclease (302 aa).

It catalyses the reaction Exonucleolytic cleavage in the 5'- to 3'-direction to yield nucleoside 5'-phosphates.. Its function is as follows. This enzyme is essential for phage DNA replication; it is believed to function in the removal of DNA-linked RNA primers. It is also necessary for host DNA degradation and phage genetic recombination. The polypeptide is Exodeoxyribonuclease (6) (Enterobacteria phage T3 (Bacteriophage T3)).